A 531-amino-acid chain; its full sequence is Cytochrome P450 monooxygenase acuC (531 aa).

The helical transmembrane segment at 3–23 (PIVWLLGGAIALLVVVIRAAW) threads the bilayer. Cysteine 447 is a binding site for heme.

It belongs to the cytochrome P450 family. It depends on heme as a cofactor.

The protein localises to the endoplasmic reticulum membrane. It catalyses the reaction 3-methylphenol + reduced [NADPH--hemoprotein reductase] + O2 = 3-hydroxybenzyl alcohol + oxidized [NADPH--hemoprotein reductase] + H2O + H(+). Its pathway is secondary metabolite biosynthesis. Functionally, cytochrome P450 monooxygenase; part of the gene cluster that mediates the biosynthesis of aculins. The pathway begins with the synthesis of 6-methylsalicylic acid by the polyketide synthase (PKS) acuA via condensation of acetate and malonate units. The 6-methylsalicylic acid decarboxylase acuB then catalyzes the decarboxylation of 6-methylsalicylic acid to yield m-cresol (also known as 3-methylphenol). These first reactions occur in the cytosol. The intermediate m-cresol is then transported into the endoplasmic reticulum where the cytochrome P450 monooxygenase acuC converts it to m-hydroxybenzyl alcohol, which is further converted to gentisyl alcohol by the cytochrome P450 monooxygenase acuD. Gentisyl alcohol is further oxidized by the oxidoreductase acuE that probably catalyzes hydroxylation of the aromatic ring. The aromatic system might then be opened by oxidation through a Baeyer-Villiger type of oxidation, which could be catalyzed by acuF, with the carboxylic acid at C-1 subsequently reduced to an aldehyde by acuG. Subsequently, a hemiacetal is formed, before the dehydrogenase acuH would reduce the double bond between C-4 and C-6. Finally, keto-enol tautomerism results in formation of aculinic acid, which exists as two diastereomers (both R/S configurations at C-1) by non-enzymatic hemiacetal formation. The carboxypeptidase acuI could be involved in the linking of aculinic acid to an aculene A moiety produced by the aculene biosynthesis cluster and which leads to the production of aculin A. AcuI may also be involved in the attachment of proline to aculinic acid to form epi-aculins A and B. This is Cytochrome P450 monooxygenase acuC from Aspergillus aculeatus (strain ATCC 16872 / CBS 172.66 / WB 5094).